The following is a 247-amino-acid chain: Sugar fermentation stimulation protein homolog (247 aa).

It belongs to the SfsA family.

In Methylorubrum populi (strain ATCC BAA-705 / NCIMB 13946 / BJ001) (Methylobacterium populi), this protein is Sugar fermentation stimulation protein homolog.